Consider the following 108-residue polypeptide: Nucleoid-associated protein Mpe_A2533 (108 aa).

Positions 86–108 are disordered; sequence TSEEKMGKLTAGMPLPPGMKLPF. Residues 99–108 are compositionally biased toward pro residues; it reads PLPPGMKLPF.

Belongs to the YbaB/EbfC family. In terms of assembly, homodimer.

It is found in the cytoplasm. The protein localises to the nucleoid. Functionally, binds to DNA and alters its conformation. May be involved in regulation of gene expression, nucleoid organization and DNA protection. This is Nucleoid-associated protein Mpe_A2533 from Methylibium petroleiphilum (strain ATCC BAA-1232 / LMG 22953 / PM1).